Here is a 252-residue protein sequence, read N- to C-terminus: Probable oligoribonuclease (252 aa).

Residues 81 to 241 (VWIDCEMTGL…ALSDILESIG (161 aa)) enclose the Exonuclease domain. Residue Tyr-202 is part of the active site.

The protein belongs to the oligoribonuclease family.

Its subcellular location is the cytoplasm. The protein localises to the nucleus. In terms of biological role, 3'-to-5' exoribonuclease specific for small oligoribonucleotides. This chain is Probable oligoribonuclease (rex2), found in Schizosaccharomyces pombe (strain 972 / ATCC 24843) (Fission yeast).